The following is a 146-amino-acid chain: Hemoglobin subunit beta (146 aa).

V1 carries the post-translational modification N-acetylvaline. The Globin domain maps to 2–146 (HLTAEEKAAV…VANALAHKYH (145 aa)). T12 is modified (phosphothreonine). S44 carries the post-translational modification Phosphoserine. The residue at position 59 (K59) is an N6-acetyllysine. H63 contributes to the heme b binding site. Residue K82 is modified to N6-acetyllysine. H92 lines the heme b pocket. C93 carries the S-nitrosocysteine modification. At K144 the chain carries N6-acetyllysine.

Belongs to the globin family. In terms of assembly, heterotetramer of two alpha chains and two beta chains. As to expression, red blood cells.

Involved in oxygen transport from the lung to the various peripheral tissues. In Mellivora capensis (Ratel), this protein is Hemoglobin subunit beta (HBB).